Reading from the N-terminus, the 224-residue chain is Putative cytochrome c-type biogenesis protein DbsD-like (224 aa).

The next 5 helical transmembrane spans lie at 32–52 (FIFLSGLFTSLSPCIISILPV), 74–94 (FLFCLGTISSFITLGILATLI), 104–124 (GIPTISAVVIIYMGLNLLNIV), 150–170 (GIGIAISSCSTPIFVTLLVWI), and 176–196 (IFTGLIFILIYSIGYIFPIII).

Belongs to the DsbD family.

The protein localises to the plastid. The protein resides in the chloroplast membrane. In terms of biological role, could be involved in cytochrome c synthesis. The protein is Putative cytochrome c-type biogenesis protein DbsD-like of Pyropia yezoensis (Susabi-nori).